We begin with the raw amino-acid sequence, 718 residues long: Exostosin-2 (718 aa).

Residues 1–25 lie on the Cytoplasmic side of the membrane; the sequence is MCASVKYNIRGPALIPRMKTKHRIY. Residues 26 to 46 form a helical; Signal-anchor for type II membrane protein membrane-spanning segment; sequence YITLFSIVLLGLIATGMFQFW. The Lumenal segment spans residues 47–718; the sequence is PHSIESSGDW…LKSFPNIGSL (672 aa). Cystine bridges form between cysteine 85–cysteine 90, cysteine 96–cysteine 151, cysteine 286–cysteine 300, and cysteine 318–cysteine 339. Residue asparagine 288 is glycosylated (N-linked (GlcNAc...) asparagine). Residues leucine 461, arginine 465, asparagine 490, and asparagine 517 each contribute to the UDP site. 7 residues coordinate UDP-N-acetyl-alpha-D-glucosamine: arginine 465, asparagine 490, asparagine 517, arginine 522, aspartate 538, aspartate 539, and aspartate 540. Residues aspartate 538 and aspartate 539 each contribute to the UDP site. Aspartate 540 contacts Mn(2+). Residues tyrosine 582 and serine 584 each coordinate a protein. Cysteine 626 and cysteine 676 are disulfide-bonded. UDP-N-acetyl-alpha-D-glucosamine contacts are provided by glutamate 627 and aspartate 628. Asparagine 637 is a glycosylation site (N-linked (GlcNAc...) asparagine). A protein-binding residues include lysine 651 and lysine 653. Arginine 673 is a UDP-N-acetyl-alpha-D-glucosamine binding site.

The protein belongs to the glycosyltransferase 47 family. In terms of assembly, part of the heparan sulfate polymerase, a dimeric complex composed of EXT1 and EXT2. Could also form homooligomeric complexes. Interacts with NDST1. Interacts with GALNT5. Requires Mn(2+) as cofactor. In terms of processing, a soluble form is generated by proteolytic processing. Post-translationally, N-glycosylated at Asn-637.

It localises to the golgi apparatus membrane. The protein resides in the golgi apparatus. It is found in the cis-Golgi network membrane. Its subcellular location is the endoplasmic reticulum membrane. The protein localises to the secreted. The enzyme catalyses 3-O-{[(1-&gt;4)-beta-D-GlcA-(1-&gt;4)-alpha-D-GlcNAc](n)-(1-&gt;4)-beta-D-GlcA-(1-&gt;3)-beta-D-Gal-(1-&gt;3)-beta-D-Gal-(1-&gt;4)-beta-D-Xyl}-L-seryl-[protein] + UDP-N-acetyl-alpha-D-glucosamine = 3-O-{alpha-D-GlcNAc-[(1-&gt;4)-beta-D-GlcA-(1-&gt;4)-alpha-D-GlcNAc](n)-(1-&gt;4)-beta-D-GlcA-(1-&gt;3)-beta-D-Gal-(1-&gt;3)-beta-D-Gal-(1-&gt;4)-beta-D-Xyl}-L-seryl-[protein] + UDP + H(+). It functions in the pathway protein modification; protein glycosylation. In terms of biological role, glycosyltransferase forming with EXT1 the heterodimeric heparan sulfate polymerase which catalyzes the elongation of the heparan sulfate glycan backbone. Glycan backbone extension consists in the alternating transfer of (1-&gt;4)-beta-D-GlcA and (1-&gt;4)-alpha-D-GlcNAc residues from their respective UDP-sugar donors. Both EXT1 and EXT2 are required for the full activity of the polymerase since EXT1 bears the N-acetylglucosaminyl-proteoglycan 4-beta-glucuronosyltransferase activity within the complex while EXT2 carries the glucuronosyl-N-acetylglucosaminyl-proteoglycan 4-alpha-N-acetylglucosaminyltransferase activity. Heparan sulfate proteoglycans are ubiquitous components of the extracellular matrix and play an important role in tissue homeostasis and signaling. In Bos taurus (Bovine), this protein is Exostosin-2.